Reading from the N-terminus, the 326-residue chain is Beta-ketoacyl-[acyl-carrier-protein] synthase III (326 aa).

Catalysis depends on residues cysteine 112 and histidine 251. The ACP-binding stretch occupies residues 252–256 (QANSR). The active site involves asparagine 281.

The protein belongs to the thiolase-like superfamily. FabH family. Homodimer.

It is found in the cytoplasm. It carries out the reaction malonyl-[ACP] + acetyl-CoA + H(+) = 3-oxobutanoyl-[ACP] + CO2 + CoA. Its pathway is lipid metabolism; fatty acid biosynthesis. Functionally, catalyzes the condensation reaction of fatty acid synthesis by the addition to an acyl acceptor of two carbons from malonyl-ACP. Catalyzes the first condensation reaction which initiates fatty acid synthesis and may therefore play a role in governing the total rate of fatty acid production. Possesses both acetoacetyl-ACP synthase and acetyl transacylase activities. Its substrate specificity determines the biosynthesis of branched-chain and/or straight-chain of fatty acids. This is Beta-ketoacyl-[acyl-carrier-protein] synthase III from Clostridium botulinum (strain ATCC 19397 / Type A).